The following is a 437-amino-acid chain: Mitochondrial distribution and morphology protein 12 (437 aa).

In terms of domain architecture, SMP-LTD spans 1–437 (MSIDINWRTA…VYPSFWTFLI (437 aa)). Positions 73 to 85 (DDDADTSDVSEDL) are enriched in acidic residues. 3 disordered regions span residues 73-101 (DDDA…SELN), 187-274 (SDSG…PPRM), and 354-384 (SEQQ…RQGG). The segment covering 91–101 (SQWDRTHSELN) has biased composition (basic and acidic residues). 2 stretches are compositionally biased toward polar residues: residues 215-240 (DTSN…NNLN) and 371-381 (ADSSAHTSQKR).

This sequence belongs to the MDM12 family. As to quaternary structure, component of the ER-mitochondria encounter structure (ERMES) or MDM complex, composed of mmm1, mdm10, mdm12 and mdm34. A mmm1 homodimer associates with one molecule of mdm12 on each side in a pairwise head-to-tail manner, and the SMP-LTD domains of mmm1 and mdm12 generate a continuous hydrophobic tunnel for phospholipid trafficking.

The protein resides in the mitochondrion outer membrane. Its subcellular location is the endoplasmic reticulum membrane. In terms of biological role, component of the ERMES/MDM complex, which serves as a molecular tether to connect the endoplasmic reticulum (ER) and mitochondria. Components of this complex are involved in the control of mitochondrial shape and protein biogenesis, and function in nonvesicular lipid trafficking between the ER and mitochondria. Mdm12 is required for the interaction of the ER-resident membrane protein mmm1 and the outer mitochondrial membrane-resident beta-barrel protein mdm10. The mdm12-mmm1 subcomplex functions in the major beta-barrel assembly pathway that is responsible for biogenesis of all mitochondrial outer membrane beta-barrel proteins, and acts in a late step after the SAM complex. The mdm10-mdm12-mmm1 subcomplex further acts in the TOM40-specific pathway after the action of the mdm12-mmm1 complex. Essential for establishing and maintaining the structure of mitochondria and maintenance of mtDNA nucleoids. This is Mitochondrial distribution and morphology protein 12 from Aspergillus clavatus (strain ATCC 1007 / CBS 513.65 / DSM 816 / NCTC 3887 / NRRL 1 / QM 1276 / 107).